Consider the following 177-residue polypeptide: Dual-action ribosomal maturation protein DarP (177 aa).

This sequence belongs to the DarP family.

The protein localises to the cytoplasm. In terms of biological role, member of a network of 50S ribosomal subunit biogenesis factors which assembles along the 30S-50S interface, preventing incorrect 23S rRNA structures from forming. Promotes peptidyl transferase center (PTC) maturation. This is Dual-action ribosomal maturation protein DarP from Histophilus somni (strain 2336) (Haemophilus somnus).